We begin with the raw amino-acid sequence, 436 residues long: 3-ketoacyl-CoA thiolase (436 aa).

The active-site Acyl-thioester intermediate is Cys99. Catalysis depends on proton acceptor residues His392 and Cys422.

It belongs to the thiolase-like superfamily. Thiolase family. Heterotetramer of two alpha chains (FadJ) and two beta chains (FadI).

It is found in the cytoplasm. It catalyses the reaction an acyl-CoA + acetyl-CoA = a 3-oxoacyl-CoA + CoA. It functions in the pathway lipid metabolism; fatty acid beta-oxidation. Catalyzes the final step of fatty acid oxidation in which acetyl-CoA is released and the CoA ester of a fatty acid two carbons shorter is formed. The sequence is that of 3-ketoacyl-CoA thiolase from Escherichia coli O127:H6 (strain E2348/69 / EPEC).